Reading from the N-terminus, the 289-residue chain is dTDP-rhamnosyl transferase RfbG (289 aa).

The protein belongs to the glycosyltransferase 2 family.

The protein operates within bacterial outer membrane biogenesis; lipopolysaccharide biosynthesis. This Shigella flexneri protein is dTDP-rhamnosyl transferase RfbG (rfbG).